The sequence spans 321 residues: AA9 family lytic polysaccharide monooxygenase D (321 aa).

The N-terminal stretch at 1–21 (MRSTIVATFAAGLVVASLVAA) is a signal peptide. Histidine 22 serves as a coordination point for Cu(2+). 2 cysteine pairs are disulfide-bonded: cysteine 75–cysteine 192 and cysteine 116–cysteine 120. Asparagine 78 carries an N-linked (GlcNAc...) asparagine glycan. Histidine 105 provides a ligand contact to Cu(2+). An N-linked (GlcNAc...) asparagine glycan is attached at asparagine 152. 2 residues coordinate O2: histidine 178 and glutamine 187. Tyrosine 189 is a binding site for Cu(2+). N-linked (GlcNAc...) asparagine glycosylation is present at asparagine 266.

The protein belongs to the polysaccharide monooxygenase AA9 family. The cofactor is Cu(2+).

It localises to the secreted. It catalyses the reaction [(1-&gt;4)-beta-D-glucosyl]n+m + reduced acceptor + O2 = 4-dehydro-beta-D-glucosyl-[(1-&gt;4)-beta-D-glucosyl]n-1 + [(1-&gt;4)-beta-D-glucosyl]m + acceptor + H2O.. Lytic polysaccharide monooxygenase (LPMO) that depolymerizes crystalline and amorphous polysaccharides via the oxidation of scissile alpha- or beta-(1-4)-glycosidic bonds, yielding C1 or C4 oxidation products. Catalysis by LPMOs requires the reduction of the active-site copper from Cu(II) to Cu(I) by a reducing agent and H(2)O(2) or O(2) as a cosubstrate. The sequence is that of AA9 family lytic polysaccharide monooxygenase D from Geotrichum candidum (Oospora lactis).